The primary structure comprises 849 residues: Period circadian protein (849 aa).

The segment covering 1–13 (MNNMDGSENNAKV) has biased composition (polar residues). The segment at 1–79 (MNNMDGSENN…LKKKKQVETL (79 aa)) is disordered. 2 stretches are compositionally biased toward low complexity: residues 14-27 (SDSA…NSQS) and 35-58 (STHS…SSSS). The short motif at 63 to 74 (DQKKEKELKKKK) is the Nuclear localization signal element. 2 PAS domains span residues 166–296 (NGFS…QAVP) and 314–416 (FVIR…YIIE). The tract at residues 680-746 (NNTPSVYEKP…VSTSSQWSSS (67 aa)) is disordered. Residues 706 to 720 (NKHHCPSSRQFRRKQ) are compositionally biased toward basic residues. The segment covering 735 to 746 (NPVSTSSQWSSS) has biased composition (low complexity).

As to quaternary structure, forms a heterodimer with timeless (TIM); the complex then translocates into the nucleus. In terms of processing, phosphorylated with a circadian rhythmicity.

It localises to the nucleus. Its function is as follows. Involved in the generation of biological rhythms. The biological cycle depends on the rhythmic formation and nuclear localization of the tim-per complex. Light induces the degradation of tim, which promotes elimination of per. Nuclear activity of the heterodimer coordinatively regulates per and tim transcription negative feedback loop. Behaves as a negative element in circadian transcriptional loop. Does not appear to bind DNA, suggesting indirect transcriptional inhibition. Expression exhibits prominent circadian variation in adult heads and in particular in the photoreceptor nuclei. The protein is Period circadian protein (per) of Antheraea pernyi (Chinese oak silk moth).